The primary structure comprises 664 residues: MADLWDDNDDDDDILELVNRPPMSQMAVPIKPPESQAEQLMKAKGEVGVLRQKLSMLEKTLREHDDNQKKLESSLKSSHEEEVTKLKIELERLEDERKFMLLEQKHLFTPRNSSKSETTHETETAEPSPIENKRRRMEPVKEYVTLTQNFKVDDGSLFYDHLLNFKLLGSEHTVLEMLDHICTYKTDLILSPEHKIIKARLPLGPPIRSLIFKWKSIYTLDQLVDKTLEILAIAIKSVSVLPENKLAIPFLISLMHCTINFRHSATSVSSLKDVFQFITDFIISDPKFLKQPLHESPLDLDVSPDVFQYSMLDQLCMTYSFDVLETCIVILLNCNTRAQEIVLNDATIAENLIKCCNFTLSISYKPIMPIIVNVTEILLGIVELDGAENVWKGKWAVLFSKLIQNWERSLTFDSVSLNFAGLNRCCGDNSNHSMIDNIISLEEVRYLPMIIENEFEPLTFTALDNLEYWSIQIQINITLIMHKLLHRYRSTLCSLEFLQKTFSLFSSHQELLLTVFLDRDHISDIKRQELLSVLLKLIYFCWVSISDEYKRALRLDELTICLWRIVYGWPESTDELSTEWAALINPLKALALEEEKKYFDDAYDEDNLPAFMHSEELDIKRESAVSKFNNNSSWPLRDMAKYILESITTMDEADSLYVAMVSET.

A coiled-coil region spans residues 38-107 (EQLMKAKGEV…KFMLLEQKHL (70 aa)). Disordered stretches follow at residues 61–81 (LREHDDNQKKLESSLKSSHEE) and 109–132 (TPRNSSKSETTHETETAEPSPIEN).

In terms of assembly, forms a complex with MEC1.

The protein resides in the cytoplasm. It is found in the nucleus. Functionally, forms a complex with the serine/threonine kinase MEC1 which activates checkpoint signaling upon genotoxic stresses. The MEC1-LCD1 complex is recruited to DNA lesions in order to initiates the DNA repair by homologous recombination. Required for cell growth and meiotic recombination. The sequence is that of DNA damage checkpoint protein LCD1 (LCD1) from Kluyveromyces lactis (strain ATCC 8585 / CBS 2359 / DSM 70799 / NBRC 1267 / NRRL Y-1140 / WM37) (Yeast).